The chain runs to 177 residues: Large ribosomal subunit protein uL6 (177 aa).

Basic and acidic residues predominate over residues 156-171 (PYKGKGVRYDTETIRR). Positions 156–177 (PYKGKGVRYDTETIRRKEGKKK) are disordered.

It belongs to the universal ribosomal protein uL6 family. In terms of assembly, part of the 50S ribosomal subunit.

Its function is as follows. This protein binds to the 23S rRNA, and is important in its secondary structure. It is located near the subunit interface in the base of the L7/L12 stalk, and near the tRNA binding site of the peptidyltransferase center. This Gluconacetobacter diazotrophicus (strain ATCC 49037 / DSM 5601 / CCUG 37298 / CIP 103539 / LMG 7603 / PAl5) protein is Large ribosomal subunit protein uL6.